We begin with the raw amino-acid sequence, 114 residues long: Hydrogenase maturation factor HypA (114 aa).

His-2 is a Ni(2+) binding site. The Zn(2+) site is built by Cys-73, Cys-76, Cys-89, and Cys-92.

It belongs to the HypA/HybF family.

In terms of biological role, involved in the maturation of [NiFe] hydrogenases. Required for nickel insertion into the metal center of the hydrogenase. In Azoarcus sp. (strain BH72), this protein is Hydrogenase maturation factor HypA.